The primary structure comprises 114 residues: DNA-directed RNA polymerase subunit Rpo4 (114 aa).

This sequence belongs to the eukaryotic RPB4 RNA polymerase subunit family. In terms of assembly, part of the 13-subunit RNA polymerase complex. Forms a stalk with Rpo7 that extends from the main structure. In terms of processing, in purified enzyme appears as 5 forms, each differing by about 200 Da of a covalently bound, negatively charged residue. Not glycosylated.

The protein resides in the cytoplasm. It carries out the reaction RNA(n) + a ribonucleoside 5'-triphosphate = RNA(n+1) + diphosphate. Its function is as follows. DNA-dependent RNA polymerase catalyzes the transcription of DNA into RNA using the four ribonucleoside triphosphates as substrates. This subunit is less well bound than the others. Probably not involved in transcription initiation. The sequence is that of DNA-directed RNA polymerase subunit Rpo4 from Sulfolobus acidocaldarius (strain ATCC 33909 / DSM 639 / JCM 8929 / NBRC 15157 / NCIMB 11770).